A 245-amino-acid chain; its full sequence is Protein FAM133B (245 aa).

2 disordered regions span residues 19–38 (SRGP…NRPR) and 69–245 (WKKE…SDSP). Over residues 69–80 (WKKELEKHREKL) the composition is skewed to basic and acidic residues. At serine 82 the chain carries Phosphoserine. The segment covering 89–102 (KKRQKKKKEKKKSG) has biased composition (basic residues). The span at 103 to 119 (RYSSSSSSSSDSSSSSS) shows a compositional bias: low complexity. A compositionally biased stretch (basic residues) spans 128–140 (QTKRRKKKKSHCH). The segment covering 165 to 176 (KDITEREKDTKG) has biased composition (basic and acidic residues). Serine 190, serine 191, serine 193, and serine 195 each carry phosphoserine. The span at 209 to 219 (SGEERERTTDK) shows a compositional bias: basic and acidic residues. Over residues 220–237 (AKKRRKHKKHSKKKKKKA) the composition is skewed to basic residues.

This sequence belongs to the FAM133 family.

The sequence is that of Protein FAM133B (Fam133b) from Rattus norvegicus (Rat).